Reading from the N-terminus, the 403-residue chain is 4,4'-dithiodibutanoate disulfide reductase (403 aa).

Glutamine 103 contacts FMN. Tyrosine 173 functions as the Proton donor in the catalytic mechanism. 348–349 is a binding site for FMN; the sequence is AR.

It belongs to the NADH:flavin oxidoreductase/NADH oxidase family. It depends on FMN as a cofactor.

It carries out the reaction 2 4-sulfanylbutanoate + NAD(+) = 4,4'-disulfanyldibutanoate + NADH + H(+). Its activity is regulated as follows. Inactivated by cobalt, nickel and zinc ions. Involved in the degradation of the organic disulfide 4,4'-dithiodibutyric acid (DTDB). Catalyzes the initial cleavage of DTDB into 2 molecules of 4-mercaptobutyric acid (4MB). Low activities are observed with other disulfide compounds, such as 3,3'-dithiodipropionic acid DTDP, 3,3'-thiodipropionic acid TDP and DTNB. The sequence is that of 4,4'-dithiodibutanoate disulfide reductase from Rhodococcus erythropolis (Arthrobacter picolinophilus).